Reading from the N-terminus, the 399-residue chain is MKMYDLPDKRGHFGPYGGTFVAETLISALDELCKQYEYYRGDAEFQTEFFRELKHYVGRPSPIYHARRWSDHLGGAQILLKREDLNHTGAHKINNTVGQALLARRMGKSRIIAETGAGQHGVASATVAARYGMECVVYMGSEDVKRQATNVYRMKLLGATVIPVDSGSRTLKDALNEAMRDWVTNVGNTYYIIGTVAGPHPYPMMVRDFQAVIGNEARQQMQEEYGRQPDALIACVGGGSNAIGLFYPYIGEENVRMIGVEAAGKGIDTQKHAATLVTGRPGVLHGNRTYLIQDENGQIIETHSISAGLDYPGVGPEHAWLKDCGRAEYVAITDGEALAAFHALCRFEGIMPALESSHALAYAAKLAPTLRKDQLLLVNLSGRGDKDMATVAQQSGISL.

The residue at position 92 (K92) is an N6-(pyridoxal phosphate)lysine.

The protein belongs to the TrpB family. Tetramer of two alpha and two beta chains. Requires pyridoxal 5'-phosphate as cofactor.

It carries out the reaction (1S,2R)-1-C-(indol-3-yl)glycerol 3-phosphate + L-serine = D-glyceraldehyde 3-phosphate + L-tryptophan + H2O. It functions in the pathway amino-acid biosynthesis; L-tryptophan biosynthesis; L-tryptophan from chorismate: step 5/5. In terms of biological role, the beta subunit is responsible for the synthesis of L-tryptophan from indole and L-serine. This Nitrosomonas eutropha (strain DSM 101675 / C91 / Nm57) protein is Tryptophan synthase beta chain.